The primary structure comprises 856 residues: Leucine--tRNA ligase (856 aa).

Residues 53–63 (PYPSGNLHMGH) carry the 'HIGH' region motif. The 'KMSKS' region motif lies at 622 to 626 (KMSKS). Lys-625 is a binding site for ATP.

This sequence belongs to the class-I aminoacyl-tRNA synthetase family.

It localises to the cytoplasm. The enzyme catalyses tRNA(Leu) + L-leucine + ATP = L-leucyl-tRNA(Leu) + AMP + diphosphate. This chain is Leucine--tRNA ligase, found in Prochlorococcus marinus (strain MIT 9215).